The following is a 657-amino-acid chain: Probable potassium transport system protein Kup 1 (657 aa).

The next 12 membrane-spanning stretches (helical) occupy residues 40 to 60 (VTSGFWALTLGSIGVVFGDIG), 88 to 108 (VLSLILWALLIVVTAKYVLLL), 135 to 155 (WFLLALGVVGASMFIGDSMIT), 172 to 192 (PALEHYVVPLTVLILVLLFAV), 198 to 218 (ALVASAFGPVMVVWFTCIAVM), 241 to 261 (FLLSHGTIGLVTLGAVFLAVT), 282 to 302 (WMFFVLPSLLINYFGQGALVL), 320 to 340 (LVLPLVGLATAATVIASQAVI), 380 to 400 (LLLIGVMLLVLLFHTPSNLAS), 402 to 422 (YGIAVSTTMVADGIMGFVVIW), 432 to 452 (AAAVILPFVVVDMSFFSANLL), and 454 to 474 (LLEGAWVPLLFGAAMAGTIWT).

This sequence belongs to the HAK/KUP transporter (TC 2.A.72) family.

It is found in the cell inner membrane. It catalyses the reaction K(+)(in) + H(+)(in) = K(+)(out) + H(+)(out). Transport of potassium into the cell. Likely operates as a K(+):H(+) symporter. The polypeptide is Probable potassium transport system protein Kup 1 (Bradyrhizobium diazoefficiens (strain JCM 10833 / BCRC 13528 / IAM 13628 / NBRC 14792 / USDA 110)).